Here is a 629-residue protein sequence, read N- to C-terminus: UvrABC system protein C (629 aa).

Residues 12-91 (DRPGCYLFKD…IKKHKPKYNI (80 aa)) enclose the GIY-YIG domain. A UVR domain is found at 200–235 (QEVLERLRARMEQAAERLEFERAAELRDQIRAIEKV).

It belongs to the UvrC family. Interacts with UvrB in an incision complex.

The protein resides in the cytoplasm. In terms of biological role, the UvrABC repair system catalyzes the recognition and processing of DNA lesions. UvrC both incises the 5' and 3' sides of the lesion. The N-terminal half is responsible for the 3' incision and the C-terminal half is responsible for the 5' incision. The chain is UvrABC system protein C from Symbiobacterium thermophilum (strain DSM 24528 / JCM 14929 / IAM 14863 / T).